The chain runs to 1013 residues: MAEPGHSHHLSARVRGRTERRIPRLWRLLLWAGTAFQVTQGTGPELHACKESEYHYEYTACDSTGSRWRVAVPHTPGLCTSLPDPIKGTECSFSCNAGEFLDMKDQSCKPCAEGRYSLGTGIRFDEWDELPHGFASLSANMELDDSAAESTGNCTSSKWVPRGDYIASNTDECTATLMYAVNLKQSGTVNFEYYYPDSSIIFEFFVQNDQCQPNADDSRWMKTTEKGWEFHSVELNRGNNVLYWRTTAFSVWTKVPKPVLVRNIAITGVAYTSECFPCKPGTYADKQGSSFCKLCPANSYSNKGETSCHQCDPDKYSEKGSSSCNVRPACTDKDYFYTHTACDANGETQLMYKWAKPKICSEDLEGAVKLPASGVKTHCPPCNPGFFKTNNSTCQPCPYGSYSNGSDCTRCPAGTEPAVGFEYKWWNTLPTNMETTVLSGINFEYKGMTGWEVAGDHIYTAAGASDNDFMILTLVVPGFRPPQSVMADTENKEVARITFVFETLCSVNCELYFMVGVNSRTNTPVETWKGSKGKQSYTYIIEENTTTSFTWAFQRTTFHEASRKYTNDVAKIYSINVTNVMNGVASYCRPCALEASDVGSSCTSCPAGYYIDRDSGTCHSCPTNTILKAHQPYGVQACVPCGPGTKNNKIHSLCYNDCTFSRNTPTRTFNYNFSALANTVTLAGGPSFTSKGLKYFHHFTLSLCGNQGRKMSVCTDNVTDLRIPEGESGFSKSITAYVCQAVIIPPEVTGYKAGVSSQPVSLADRLIGVTTDMTLDGITSPAELFHLESLGIPDVIFFYRSNDVTQSCSSGRSTTIRVRCSPQKTVPGSLLLPGTCSDGTCDGCNFHFLWESAAACPLCSVADYHAIVSSCVAGIQKTTYVWREPKLCSGGISLPEQRVTICKTIDFWLKVGISAGTCTAILLTVLTCYFWKKNQKLEYKYSKLVMNATLKDCDLPAADSCAIMEGEDVEDDLIFTSKKSLFGKIKSFTSKRTPDGFDSVPLKTSSGGLDMDL.

The first 41 residues, 1–41 (MAEPGHSHHLSARVRGRTERRIPRLWRLLLWAGTAFQVTQG), serve as a signal peptide directing secretion. The Extracellular segment spans residues 42-910 (TGPELHACKE…ICKTIDFWLK (869 aa)). N-linked (GlcNAc...) asparagine glycosylation occurs at Asn-153. Disulfide bonds link Cys-278–Cys-295, Cys-308–Cys-330, and Cys-311–Cys-342. N-linked (GlcNAc...) asparagine glycans are attached at residues Asn-404 and Asn-672. Residues 656-858 (NDCTFSRNTP…LWESAAACPL (203 aa)) enclose the MRH domain. Disulfide bonds link Cys-658–Cys-704, Cys-714–Cys-739, Cys-808–Cys-844, and Cys-820–Cys-856. A helical membrane pass occupies residues 911–931 (VGISAGTCTAILLTVLTCYFW). Topologically, residues 932–1013 (KKNQKLEYKY…TSSGGLDMDL (82 aa)) are cytoplasmic.

This sequence belongs to the ELAPOR family. As to quaternary structure, interacts with HSPA5; may regulate the function of HSPA5 in apoptosis and cell proliferation. In terms of tissue distribution, expressed in normal endometrium but overexpressed in endometroid tumors.

The protein localises to the cell membrane. Its subcellular location is the late endosome membrane. It is found in the golgi apparatus. It localises to the trans-Golgi network membrane. The protein resides in the lysosome membrane. The protein localises to the endoplasmic reticulum membrane. Functionally, may protect cells from cell death by inducing cytosolic vacuolization and up-regulating the autophagy pathway. May play a role in apoptosis and cell proliferation through its interaction with HSPA5. This is Endosome/lysosome-associated apoptosis and autophagy regulator 1 from Homo sapiens (Human).